We begin with the raw amino-acid sequence, 205 residues long: Probable GTP-binding protein EngB (205 aa).

Residues 27–201 (TGIEIAFAGR…AVKLDFWFSP (175 aa)) enclose the EngB-type G domain. GTP-binding positions include 35 to 42 (GRSNAGKS), 62 to 66 (GRTQL), 80 to 83 (DLPG), 147 to 150 (TKAD), and 180 to 182 (FSA). Residues Ser-42 and Thr-64 each contribute to the Mg(2+) site.

Belongs to the TRAFAC class TrmE-Era-EngA-EngB-Septin-like GTPase superfamily. EngB GTPase family. It depends on Mg(2+) as a cofactor.

In terms of biological role, necessary for normal cell division and for the maintenance of normal septation. The polypeptide is Probable GTP-binding protein EngB (Haemophilus influenzae (strain PittGG)).